Reading from the N-terminus, the 63-residue chain is Bowman-Birk type proteinase inhibitor (63 aa).

7 disulfides stabilise this stretch: Cys8/Cys61, Cys9/Cys24, Cys12/Cys57, Cys14/Cys22, Cys31/Cys38, Cys35/Cys50, and Cys40/Cys48.

The protein belongs to the Bowman-Birk serine protease inhibitor family.

This inhibitor has two domains, each with separate antiprotease activity. Inhibits bovine trypsin and chymotrypsin, in a molar ratio of 1:1. The trypsin inhibition of FBI is independent of chymotrypsin inhibition, but the chymotrypsin inhibition is not completely independent of trypsin inhibition. In Vicia faba (Broad bean), this protein is Bowman-Birk type proteinase inhibitor.